The following is a 549-amino-acid chain: CTP synthase (549 aa).

The interval methionine 1–leucine 267 is amidoligase domain. Residue serine 13 coordinates CTP. Serine 13 contacts UTP. ATP-binding positions include serine 14–isoleucine 19 and aspartate 71. Residues aspartate 71 and glutamate 141 each contribute to the Mg(2+) site. CTP-binding positions include aspartate 148–glutamate 150, lysine 188–glutamine 193, and lysine 224. UTP is bound by residues lysine 188–glutamine 193 and lysine 224. The Glutamine amidotransferase type-1 domain maps to lysine 292–aspartate 534. Glycine 354 contacts L-glutamine. The active-site Nucleophile; for glutamine hydrolysis is the cysteine 381. Residues leucine 382–glutamine 385, glutamate 405, and arginine 462 each bind L-glutamine. Catalysis depends on residues histidine 507 and glutamate 509.

The protein belongs to the CTP synthase family. Homotetramer.

It carries out the reaction UTP + L-glutamine + ATP + H2O = CTP + L-glutamate + ADP + phosphate + 2 H(+). The enzyme catalyses L-glutamine + H2O = L-glutamate + NH4(+). The catalysed reaction is UTP + NH4(+) + ATP = CTP + ADP + phosphate + 2 H(+). The protein operates within pyrimidine metabolism; CTP biosynthesis via de novo pathway; CTP from UDP: step 2/2. Allosterically activated by GTP, when glutamine is the substrate; GTP has no effect on the reaction when ammonia is the substrate. The allosteric effector GTP functions by stabilizing the protein conformation that binds the tetrahedral intermediate(s) formed during glutamine hydrolysis. Inhibited by the product CTP, via allosteric rather than competitive inhibition. Catalyzes the ATP-dependent amination of UTP to CTP with either L-glutamine or ammonia as the source of nitrogen. Regulates intracellular CTP levels through interactions with the four ribonucleotide triphosphates. The polypeptide is CTP synthase (Synechococcus sp. (strain CC9605)).